Here is a 325-residue protein sequence, read N- to C-terminus: Acetyl-coenzyme A carboxylase carboxyl transferase subunit beta (325 aa).

In terms of domain architecture, CoA carboxyltransferase N-terminal spans 24-293 (LWIKCPDSGH…AEIEVVTPEP (270 aa)).

Belongs to the AccD/PCCB family. As to quaternary structure, acetyl-CoA carboxylase is a heterohexamer composed of biotin carboxyl carrier protein (AccB), biotin carboxylase (AccC) and two subunits each of ACCase subunit alpha (AccA) and ACCase subunit beta (AccD).

Its subcellular location is the cytoplasm. It catalyses the reaction N(6)-carboxybiotinyl-L-lysyl-[protein] + acetyl-CoA = N(6)-biotinyl-L-lysyl-[protein] + malonyl-CoA. The protein operates within lipid metabolism; malonyl-CoA biosynthesis; malonyl-CoA from acetyl-CoA: step 1/1. Functionally, component of the acetyl coenzyme A carboxylase (ACC) complex. Biotin carboxylase (BC) catalyzes the carboxylation of biotin on its carrier protein (BCCP) and then the CO(2) group is transferred by the transcarboxylase to acetyl-CoA to form malonyl-CoA. The polypeptide is Acetyl-coenzyme A carboxylase carboxyl transferase subunit beta (Rhodopseudomonas palustris (strain BisA53)).